The following is a 447-amino-acid chain: Trigger factor (447 aa).

Positions 174 to 261 constitute a PPIase FKBP-type domain; the sequence is GDIAVLGFKG…LKDLKTRELP (88 aa).

This sequence belongs to the FKBP-type PPIase family. Tig subfamily.

It is found in the cytoplasm. It carries out the reaction [protein]-peptidylproline (omega=180) = [protein]-peptidylproline (omega=0). Functionally, involved in protein export. Acts as a chaperone by maintaining the newly synthesized protein in an open conformation. Functions as a peptidyl-prolyl cis-trans isomerase. This is Trigger factor from Synechococcus sp. (strain CC9902).